We begin with the raw amino-acid sequence, 235 residues long: Claudin-15 (235 aa).

Position 1 (Met1) is a topological domain, cytoplasmic. The helical transmembrane segment at 2–24 (LVAVEIFGFFLTAVGLLMLGVTL) threads the bilayer. The Extracellular portion of the chain corresponds to 25–74 (AHSSWRVSTVHGNVITTNTIFENLWYSCATDSMGVHNCWEFPSMLALSGY). Cys52 and Cys62 are oxidised to a cystine. Residues 75 to 99 (IQACRALMITAILLGFLGLFLGMVG) form a helical membrane-spanning segment. At 100–115 (LRCTNIGGLELSRKTK) the chain is on the cytoplasmic side. Ser111 carries the phosphoserine modification. A helical membrane pass occupies residues 116-140 (LAATAGALHILAGICGMVAVSWYAF). The Extracellular portion of the chain corresponds to 141–159 (NITRDFFNPLYAGTKYELG). An important for the formation of tight-junction strand-like structures region spans residues 146 to 147 (FF). Residues 160–182 (PALYLGWSACLLAILGGICLFSN) traverse the membrane as a helical segment. The Cytoplasmic portion of the chain corresponds to 183 to 235 (CCCSRDRDPATGVQLPYKAPVIPAASLAARLPAAASDEEGDSSFGKYGKNAYV). Phosphoserine is present on residues Ser218 and Ser225.

Belongs to the claudin family. Can form homo- and heteropolymeric tight junction strands. Post-translationally, palmitoylated.

It localises to the cell junction. The protein resides in the tight junction. It is found in the cell membrane. The enzyme catalyses Na(+)(in) = Na(+)(out). It carries out the reaction K(+)(in) = K(+)(out). The catalysed reaction is Cs(+)(in) = Cs(+)(out). It catalyses the reaction Rb(+)(in) = Rb(+)(out). The enzyme catalyses Li(+)(in) = Li(+)(out). It carries out the reaction NH4(+)(in) = NH4(+)(out). The catalysed reaction is methylamine(out) = methylamine(in). It catalyses the reaction H2O(in) = H2O(out). In terms of biological role, forms paracellular channels: polymerizes in tight junction strands with cation- and water-selective channels through the strands, conveying epithelial permeability in a process known as paracellular tight junction permeability. In intestinal epithelium, allows for sodium and water fluxes from the peritoneal side to the lumen of the intestine to regulate nutrient absorption and intestinal morphogenesis. This is Claudin-15 (CLDN15) from Bos taurus (Bovine).